The sequence spans 230 residues: Sugar fermentation stimulation protein homolog (230 aa).

Belongs to the SfsA family.

This Clostridium perfringens (strain 13 / Type A) protein is Sugar fermentation stimulation protein homolog.